The following is a 397-amino-acid chain: Tubby-like protein 8 (397 aa).

The span at 1-16 (MAGSRKVNDLLEENKG) shows a compositional bias: basic and acidic residues. The segment at 1 to 46 (MAGSRKVNDLLEENKGNVDTITGSLSTQKGEDKENVSPEKVSTSVE) is disordered. The segment covering 17–28 (NVDTITGSLSTQ) has biased composition (polar residues).

The protein belongs to the TUB family. Mostly expressed in roots, flowers and siliques.

This Arabidopsis thaliana (Mouse-ear cress) protein is Tubby-like protein 8.